Reading from the N-terminus, the 405-residue chain is Cysteine desulfurase IscS (405 aa).

Pyridoxal 5'-phosphate is bound by residues 75-76, Asn156, Gln184, and 204-206; these read AT and SAH. The residue at position 207 (Lys207) is an N6-(pyridoxal phosphate)lysine. Residue Thr244 participates in pyridoxal 5'-phosphate binding. Cys329 serves as the catalytic Cysteine persulfide intermediate. Cys329 serves as a coordination point for [2Fe-2S] cluster.

It belongs to the class-V pyridoxal-phosphate-dependent aminotransferase family. NifS/IscS subfamily. In terms of assembly, homodimer. Forms a heterotetramer with IscU, interacts with other sulfur acceptors. Pyridoxal 5'-phosphate serves as cofactor.

It localises to the cytoplasm. It catalyses the reaction (sulfur carrier)-H + L-cysteine = (sulfur carrier)-SH + L-alanine. It participates in cofactor biosynthesis; iron-sulfur cluster biosynthesis. Master enzyme that delivers sulfur to a number of partners involved in Fe-S cluster assembly, tRNA modification or cofactor biosynthesis. Catalyzes the removal of elemental sulfur atoms from cysteine to produce alanine. Functions as a sulfur delivery protein for Fe-S cluster synthesis onto IscU, an Fe-S scaffold assembly protein, as well as other S acceptor proteins. This is Cysteine desulfurase IscS from Methylobacillus flagellatus (strain ATCC 51484 / DSM 6875 / VKM B-1610 / KT).